A 465-amino-acid polypeptide reads, in one-letter code: Serine carboxypeptidase-like 19 (465 aa).

A signal peptide spans 1–23 (MRNLSFIVLFLLTLFFIHHLVDA). A substrate-binding site is contributed by 77 to 79 (TGG). Disulfide bonds link Cys-82–Cys-353, Cys-246–Cys-260, and Cys-284–Cys-320. An N-linked (GlcNAc...) asparagine glycan is attached at Asn-103. 177–179 (DSY) lines the substrate pocket. Ser-178 is a catalytic residue. The propeptide at 292 to 317 (DTPNIRTDRRRVMKEFSVNDSSSLPP) is linker peptide. Asn-310 and Asn-373 each carry an N-linked (GlcNAc...) asparagine glycan. Residue Asp-389 is part of the active site. Asn-405 carries N-linked (GlcNAc...) asparagine glycosylation. Position 439–443 (439–443 (KGGGH)) interacts with substrate. His-443 is a catalytic residue.

The protein belongs to the peptidase S10 family. In terms of assembly, heterodimer. Post-translationally, N-glycosylated. In terms of tissue distribution, expressed in roots and flowers, and at lower levels in young leaves and seedlings. Expressed in mature seeds and detected in expanding siliques.

It localises to the secreted. It carries out the reaction 1-O-(trans-sinapoyl)-beta-D-glucose + choline = O-sinapoylcholine + D-glucose. Slightly inhibited by phenylmethylsulfonyl fluoride (PMSF). Its function is as follows. Involved in plants secondary metabolism. Functions as acyltransferase to form the sinapate ester sinapoylcholine also known as sinapine. Able to convert in vitro benzoylglucose into benzoylcholine. The chain is Serine carboxypeptidase-like 19 from Arabidopsis thaliana (Mouse-ear cress).